Here is a 57-residue protein sequence, read N- to C-terminus: Conotoxin reg3.17 (57 aa).

A signal peptide spans 1–16 (TICLLLFPLTVVPLDG). The propeptide occupies 17-44 (DQPAHQPAVRKHNIKSAVQLRQWDEEQQ). 3 cysteine pairs are disulfide-bonded: C45/C57, C46/C53, and C50/C56.

This sequence belongs to the conotoxin M superfamily. As to expression, expressed by the venom duct.

It localises to the secreted. The chain is Conotoxin reg3.17 from Conus regius (Crown cone).